Consider the following 418-residue polypeptide: UDP-N-acetylglucosamine 1-carboxyvinyltransferase (418 aa).

22-23 (KN) contributes to the phosphoenolpyruvate binding site. Arg93 contacts UDP-N-acetyl-alpha-D-glucosamine. The Proton donor role is filled by Cys117. Residue Cys117 is modified to 2-(S-cysteinyl)pyruvic acid O-phosphothioketal. UDP-N-acetyl-alpha-D-glucosamine is bound by residues Asp306 and Ile328.

It belongs to the EPSP synthase family. MurA subfamily.

The protein localises to the cytoplasm. The catalysed reaction is phosphoenolpyruvate + UDP-N-acetyl-alpha-D-glucosamine = UDP-N-acetyl-3-O-(1-carboxyvinyl)-alpha-D-glucosamine + phosphate. Its pathway is cell wall biogenesis; peptidoglycan biosynthesis. Functionally, cell wall formation. Adds enolpyruvyl to UDP-N-acetylglucosamine. In Hydrogenovibrio crunogenus (strain DSM 25203 / XCL-2) (Thiomicrospira crunogena), this protein is UDP-N-acetylglucosamine 1-carboxyvinyltransferase.